The following is a 626-amino-acid chain: Carnitine O-acetyltransferase (626 aa).

Lys93 bears the N6-succinyllysine mark. Lys261 bears the N6-acetyllysine; alternate mark. Lys261 carries the post-translational modification N6-succinyllysine; alternate. Residue Lys268 is modified to N6-acetyllysine. His343 functions as the Proton acceptor in the catalytic mechanism. CoA contacts are provided by residues Lys419 and 423–430 (KSQKLSPD). (R)-carnitine is bound by residues Tyr452 and Ser454. Residue Ser456 coordinates CoA. Thr465 contributes to the (R)-carnitine binding site. CoA-binding residues include Arg504 and Gln555. The Microbody targeting signal motif lies at 624–626 (AKL).

The protein belongs to the carnitine/choline acetyltransferase family. In terms of assembly, monomer. As to expression, expressed in flagella of epididymal sperm.

Its subcellular location is the endoplasmic reticulum. The protein localises to the peroxisome. It is found in the mitochondrion inner membrane. The catalysed reaction is (R)-carnitine + acetyl-CoA = O-acetyl-(R)-carnitine + CoA. It carries out the reaction propanoyl-CoA + (R)-carnitine = O-propanoyl-(R)-carnitine + CoA. The enzyme catalyses butanoyl-CoA + (R)-carnitine = O-butanoyl-(R)-carnitine + CoA. It catalyses the reaction hexanoyl-CoA + (R)-carnitine = O-hexanoyl-(R)-carnitine + CoA. The catalysed reaction is octanoyl-CoA + (R)-carnitine = O-octanoyl-(R)-carnitine + CoA. It carries out the reaction decanoyl-CoA + (R)-carnitine = O-decanoyl-(R)-carnitine + CoA. The enzyme catalyses 3-methylbutanoyl-CoA + (R)-carnitine = O-3-methylbutanoyl-(R)-carnitine + CoA. It catalyses the reaction 2-methylpropanoyl-CoA + (R)-carnitine = O-isobutanoyl-(R)-carnitine + CoA. The catalysed reaction is 2-methylbutanoyl-CoA + (R)-carnitine = O-2-methylbutanoyl-(R)-carnitine + CoA. It carries out the reaction acetoacetyl-CoA + (R)-carnitine = O-3-oxobutanoyl-(R)-carnitine + CoA. The enzyme catalyses 3-hydroxybutanoyl-CoA + (R)-carnitine = O-3-hydroxybutanoyl-(R)-carnitine + CoA. It catalyses the reaction 4,8-dimethylnonanoyl-CoA + (R)-carnitine = O-4,8-dimethylnonanoyl-(R)-carnitine + CoA. The catalysed reaction is 2,6-dimethylheptanoyl-CoA + (R)-carnitine = O-2,6-dimethylheptanoyl-(R)-carnitine + CoA. Catalyzes the reversible transfer of acyl groups from carnitine to coenzyme A (CoA) and regulates the acyl-CoA/CoA ratio. Also plays a crucial role in the transport of fatty acids for beta-oxidation. Responsible for the synthesis of short- and branched-chain acylcarnitines. Active towards some branched-chain amino acid oxidation pathway (BCAAO) intermediates. Trans-2-enoyl-CoAs and 2-methylacyl-CoAs are poor substrates. This is Carnitine O-acetyltransferase from Rattus norvegicus (Rat).